A 412-amino-acid polypeptide reads, in one-letter code: Na(+)/H(+) antiporter NhaA 1 (412 aa).

Transmembrane regions (helical) follow at residues 34–54, 75–95, 114–134, 142–162, 183–203, 234–254, 282–302, 309–329, 349–369, and 379–399; these read VGGM…NSPA, LTIG…VAGL, LPVV…FAIG, AAWA…LSLT, LGAI…LALL, WIAV…LGLL, LIVP…EALV, VAIA…FGSS, LSAL…IAEL, and AKAA…VMLL.

Belongs to the NhaA Na(+)/H(+) (TC 2.A.33) antiporter family.

It is found in the cell membrane. The enzyme catalyses Na(+)(in) + 2 H(+)(out) = Na(+)(out) + 2 H(+)(in). In terms of biological role, na(+)/H(+) antiporter that extrudes sodium in exchange for external protons. The polypeptide is Na(+)/H(+) antiporter NhaA 1 (Saccharopolyspora erythraea (strain ATCC 11635 / DSM 40517 / JCM 4748 / NBRC 13426 / NCIMB 8594 / NRRL 2338)).